We begin with the raw amino-acid sequence, 237 residues long: 1-(5-phosphoribosyl)-5-[(5-phosphoribosylamino)methylideneamino] imidazole-4-carboxamide isomerase (237 aa).

D8 functions as the Proton acceptor in the catalytic mechanism. D130 (proton donor) is an active-site residue.

It belongs to the HisA/HisF family.

It is found in the cytoplasm. It carries out the reaction 1-(5-phospho-beta-D-ribosyl)-5-[(5-phospho-beta-D-ribosylamino)methylideneamino]imidazole-4-carboxamide = 5-[(5-phospho-1-deoxy-D-ribulos-1-ylimino)methylamino]-1-(5-phospho-beta-D-ribosyl)imidazole-4-carboxamide. It functions in the pathway amino-acid biosynthesis; L-histidine biosynthesis; L-histidine from 5-phospho-alpha-D-ribose 1-diphosphate: step 4/9. The sequence is that of 1-(5-phosphoribosyl)-5-[(5-phosphoribosylamino)methylideneamino] imidazole-4-carboxamide isomerase from Halothermothrix orenii (strain H 168 / OCM 544 / DSM 9562).